A 189-amino-acid chain; its full sequence is Glycerol-3-phosphate acyltransferase (189 aa).

5 helical membrane-spanning segments follow: residues Met-1 to Leu-21, Lys-50 to Ala-70, Leu-77 to Phe-97, Met-111 to Phe-131, and Leu-151 to Val-171.

The protein belongs to the PlsY family. As to quaternary structure, probably interacts with PlsX.

It is found in the cell inner membrane. It carries out the reaction an acyl phosphate + sn-glycerol 3-phosphate = a 1-acyl-sn-glycero-3-phosphate + phosphate. It functions in the pathway lipid metabolism; phospholipid metabolism. Its function is as follows. Catalyzes the transfer of an acyl group from acyl-phosphate (acyl-PO(4)) to glycerol-3-phosphate (G3P) to form lysophosphatidic acid (LPA). This enzyme utilizes acyl-phosphate as fatty acyl donor, but not acyl-CoA or acyl-ACP. In Pseudomonas putida (strain ATCC 700007 / DSM 6899 / JCM 31910 / BCRC 17059 / LMG 24140 / F1), this protein is Glycerol-3-phosphate acyltransferase.